A 75-amino-acid polypeptide reads, in one-letter code: Small ribosomal subunit protein bS18 (75 aa).

The protein belongs to the bacterial ribosomal protein bS18 family. As to quaternary structure, part of the 30S ribosomal subunit. Forms a tight heterodimer with protein bS6.

In terms of biological role, binds as a heterodimer with protein bS6 to the central domain of the 16S rRNA, where it helps stabilize the platform of the 30S subunit. The sequence is that of Small ribosomal subunit protein bS18 from Clostridioides difficile (strain 630) (Peptoclostridium difficile).